The primary structure comprises 239 residues: Ribonuclease PH (239 aa).

Residues R86 and 124-126 (GTR) contribute to the phosphate site.

The protein belongs to the RNase PH family. As to quaternary structure, homohexameric ring arranged as a trimer of dimers.

It catalyses the reaction tRNA(n+1) + phosphate = tRNA(n) + a ribonucleoside 5'-diphosphate. Phosphorolytic 3'-5' exoribonuclease that plays an important role in tRNA 3'-end maturation. Removes nucleotide residues following the 3'-CCA terminus of tRNAs; can also add nucleotides to the ends of RNA molecules by using nucleoside diphosphates as substrates, but this may not be physiologically important. Probably plays a role in initiation of 16S rRNA degradation (leading to ribosome degradation) during starvation. The chain is Ribonuclease PH from Aromatoleum aromaticum (strain DSM 19018 / LMG 30748 / EbN1) (Azoarcus sp. (strain EbN1)).